Consider the following 520-residue polypeptide: Phospholipase C A (520 aa).

The tat-type signal signal peptide spans 1-38; it reads MSASPLLGMSRREFLTKLTGAGAAAFLMDWAAPVIEKA.

It belongs to the bacterial phospholipase C family. Post-translationally, predicted to be exported by the Tat system. The position of the signal peptide cleavage has not been experimentally proven.

The protein localises to the secreted. Its subcellular location is the cell wall. It carries out the reaction a 1,2-diacyl-sn-glycero-3-phosphocholine + H2O = phosphocholine + a 1,2-diacyl-sn-glycerol + H(+). In terms of biological role, involved in virulence. Induces cytotoxic effects on mouse macrophage cell lines, via direct or indirect enzymatic hydrolysis of cell membrane phospholipids. Hydrolyzes phosphatidylcholine. The polypeptide is Phospholipase C A (Mycobacterium tuberculosis (strain CDC 1551 / Oshkosh)).